We begin with the raw amino-acid sequence, 429 residues long: MSDSTASSINKGLAAADPAIAALIEKEQQRQETHLELIASENFASRAVMDAQGSVLTNKYAEGLPSKRYYGGCEHVDAIEELAIERAKELFGAAWANVQPHSGAQANFAVFLALLQPGDTIMGLDLSHGGHLTHGSPVNVSGKWFNVVQYGVDRETQRLDMEAIRQLALEHKPKLIVCGFSAYPRTIDFAAFRAIADEVGAFLLADMAHIAGLVAAGVHPSPVPHCDVVTTTTHKTLRGPRGGLILCRDADFAKKFDKAVFPGSQGGPLEHVIAAKAVAFGEALQPAFKTYSQHVVANAAALAERLIARGIDVVSGGTDNHVVLLDLRSVGMTGKVADLLVSDVHITANKNTVPFDPESPFVTSGLRLGTAALTTRGFDAGAFREVADVIADRLLNPEDDAVQQQCLRRVEALCQRFPLYAAARQPALA.

(6S)-5,6,7,8-tetrahydrofolate-binding positions include L126 and 130 to 132; that span reads GHL. An N6-(pyridoxal phosphate)lysine modification is found at K235. Residue 359–361 participates in (6S)-5,6,7,8-tetrahydrofolate binding; that stretch reads SPF.

Belongs to the SHMT family. In terms of assembly, homodimer. Requires pyridoxal 5'-phosphate as cofactor.

Its subcellular location is the cytoplasm. It carries out the reaction (6R)-5,10-methylene-5,6,7,8-tetrahydrofolate + glycine + H2O = (6S)-5,6,7,8-tetrahydrofolate + L-serine. It functions in the pathway one-carbon metabolism; tetrahydrofolate interconversion. It participates in amino-acid biosynthesis; glycine biosynthesis; glycine from L-serine: step 1/1. In terms of biological role, catalyzes the reversible interconversion of serine and glycine with tetrahydrofolate (THF) serving as the one-carbon carrier. This reaction serves as the major source of one-carbon groups required for the biosynthesis of purines, thymidylate, methionine, and other important biomolecules. Also exhibits THF-independent aldolase activity toward beta-hydroxyamino acids, producing glycine and aldehydes, via a retro-aldol mechanism. The polypeptide is Serine hydroxymethyltransferase (Parasynechococcus marenigrum (strain WH8102)).